The following is a 185-amino-acid chain: Ribosome-recycling factor (185 aa).

The protein belongs to the RRF family.

It localises to the cytoplasm. Functionally, responsible for the release of ribosomes from messenger RNA at the termination of protein biosynthesis. May increase the efficiency of translation by recycling ribosomes from one round of translation to another. This is Ribosome-recycling factor from Bacillus anthracis (strain CDC 684 / NRRL 3495).